The primary structure comprises 190 residues: UPF0200 protein OE_4442F (190 aa).

ATP is bound at residue 8-15; sequence GMPGSGKS. The disordered stretch occupies residues 120 to 144; the sequence is ARIEDRDRPGDTDGEPLDAREDRER.

This sequence belongs to the UPF0200 family.

The protein is UPF0200 protein OE_4442F of Halobacterium salinarum (strain ATCC 29341 / DSM 671 / R1).